The following is a 237-amino-acid chain: Zinc finger protein 22 (237 aa).

A disordered region spans residues 1–33 (MRLGKPKGGISRSASQGKTYESKRKTARQRQKW). Residues K18 and K23 each carry the N6-acetyllysine modification. C2H2-type zinc fingers lie at residues 55 to 82 (YKCT…GKKS), 83 to 110 (HKCA…GEKP), 111 to 138 (YKCD…GEKP), 139 to 166 (YCCD…GEKP), and 167 to 194 (YQCE…EKKS). The segment covering 188–217 (VHKEKKSHKRGKNARAKTHPVSWKRGKGRK) has biased composition (basic residues). The interval 188–218 (VHKEKKSHKRGKNARAKTHPVSWKRGKGRKA) is disordered.

The protein belongs to the krueppel C2H2-type zinc-finger protein family. As to expression, highly expressed in the ameloblast layer of mandibular incisors, moderately expressed in submandibular gland, calvaria, kidney and lung, and expressed at low levels in brain and thymus.

Its subcellular location is the nucleus. In terms of biological role, binds DNA through the consensus sequence 5'-CAATG-3'. May be involved in transcriptional regulation and may play a role in tooth formation. This Rattus norvegicus (Rat) protein is Zinc finger protein 22 (Znf22).